A 736-amino-acid polypeptide reads, in one-letter code: Na(+)/H(+) antiporter NhaA (736 aa).

The tract at residues 1-387 (MNHSPQSARP…ICGYLLLRAA (387 aa)) is na(+)/H(+) antiporter NhaA. 12 helical membrane-spanning segments follow: residues 23–43 (AGGI…NSPF), 58–78 (LSLA…LVGL), 96–116 (MLPG…FAVL), 126–146 (GWAV…SLLG), 155–175 (VFLA…IAIF), 178–198 (AEIS…LFVM), 201–221 (MGVV…FFVF), 224–244 (GVHA…KPAP), 265–285 (VAFI…FKGL), 298–318 (ILLG…WLAI), 334–354 (LYGV…IGLL), and 367–387 (IGVL…LRAA). Positions 388–736 (RPDQSAANPL…EKAIWARYGL (349 aa)) are peptidase S49.

In the N-terminal section; belongs to the NhaA Na(+)/H(+) (TC 2.A.33) antiporter family. This sequence in the C-terminal section; belongs to the peptidase S49 family.

The protein resides in the cell inner membrane. It carries out the reaction Na(+)(in) + 2 H(+)(out) = Na(+)(out) + 2 H(+)(in). Its function is as follows. Na(+)/H(+) antiporter that extrudes sodium in exchange for external protons. This Brucella abortus (strain 2308) protein is Na(+)/H(+) antiporter NhaA.